Reading from the N-terminus, the 269-residue chain is Intercellular adhesion molecule 4 (269 aa).

An N-terminal signal peptide occupies residues 1–20 (SLFPLSLLFFLAAAYPGVGS). The Extracellular portion of the chain corresponds to 21–238 (ALGRRTKRAQ…MLAWSSAPTA (218 aa)). Ig-like C2-type domains lie at 60-122 (GKSV…TRWA) and 144-215 (GRKY…LNLD). N-linked (GlcNAc...) asparagine glycans are attached at residues asparagine 66, asparagine 76, asparagine 188, and asparagine 221. 4 disulfides stabilise this stretch: cysteine 67–cysteine 111, cysteine 67–cysteine 115, cysteine 71–cysteine 115, and cysteine 151–cysteine 208. The chain crosses the membrane as a helical span at residues 239-259 (LASVSIAALVGILLTVGAAYL). Topologically, residues 260 to 269 (CKCLAMKSQA) are cytoplasmic.

It belongs to the immunoglobulin superfamily. ICAM family. In terms of processing, N- and O-glycosylated.

The protein resides in the cell membrane. Functionally, ICAM proteins are ligands for the leukocyte adhesion protein LFA-1 (integrin alpha-L/beta-2). ICAM4 is also a ligand for alpha-4/beta-1 and alpha-V integrins. In Pan troglodytes (Chimpanzee), this protein is Intercellular adhesion molecule 4 (ICAM4).